The primary structure comprises 373 residues: 3 beta-hydroxysteroid dehydrogenase/Delta 5--&gt;4-isomerase type 2 (373 aa).

Tyr155 serves as the catalytic Proton acceptor. Lys159 lines the NAD(+) pocket. The helical transmembrane segment at 288–308 (LPLLYWLAFLLETVSFLLRPF) threads the bilayer.

This sequence belongs to the 3-beta-HSD family. As to expression, adrenal glands, testes and ovaries.

The protein resides in the endoplasmic reticulum membrane. Its subcellular location is the mitochondrion membrane. The catalysed reaction is a 3beta-hydroxy-Delta(5)-steroid + NAD(+) = a 3-oxo-Delta(5)-steroid + NADH + H(+). It catalyses the reaction a 3-oxo-Delta(5)-steroid = a 3-oxo-Delta(4)-steroid. It functions in the pathway lipid metabolism; steroid biosynthesis. 3-beta-HSD is a bifunctional enzyme, that catalyzes the oxidative conversion of Delta(5)-ene-3-beta-hydroxy steroid, and the oxidative conversion of ketosteroids. The 3-beta-HSD enzymatic system plays a crucial role in the biosynthesis of all classes of hormonal steroids. In Rattus norvegicus (Rat), this protein is 3 beta-hydroxysteroid dehydrogenase/Delta 5--&gt;4-isomerase type 2 (Hsd3b).